Reading from the N-terminus, the 126-residue chain is Ribosome-binding factor A (126 aa).

This sequence belongs to the RbfA family. In terms of assembly, monomer. Binds 30S ribosomal subunits, but not 50S ribosomal subunits or 70S ribosomes.

It is found in the cytoplasm. In terms of biological role, one of several proteins that assist in the late maturation steps of the functional core of the 30S ribosomal subunit. Associates with free 30S ribosomal subunits (but not with 30S subunits that are part of 70S ribosomes or polysomes). Required for efficient processing of 16S rRNA. May interact with the 5'-terminal helix region of 16S rRNA. The polypeptide is Ribosome-binding factor A (Haemophilus ducreyi (strain 35000HP / ATCC 700724)).